Consider the following 257-residue polypeptide: S-methyl-5'-thioadenosine phosphorylase (257 aa).

Phosphate is bound by residues Ser-10 and 50–51 (RH). Met-180 lines the substrate pocket. Residue Thr-181 coordinates phosphate. 204-206 (DYD) contributes to the substrate binding site.

This sequence belongs to the PNP/MTAP phosphorylase family. MTAP subfamily. In terms of assembly, homohexamer. Dimer of a homotrimer.

It catalyses the reaction S-methyl-5'-thioadenosine + phosphate = 5-(methylsulfanyl)-alpha-D-ribose 1-phosphate + adenine. It functions in the pathway amino-acid biosynthesis; L-methionine biosynthesis via salvage pathway; S-methyl-5-thio-alpha-D-ribose 1-phosphate from S-methyl-5'-thioadenosine (phosphorylase route): step 1/1. Its function is as follows. Catalyzes the reversible phosphorylation of S-methyl-5'-thioadenosine (MTA) to adenine and 5-methylthioribose-1-phosphate. Involved in the breakdown of MTA, a major by-product of polyamine biosynthesis. Responsible for the first step in the methionine salvage pathway after MTA has been generated from S-adenosylmethionine. Has broad substrate specificity with 6-aminopurine nucleosides as preferred substrates. In Pyrococcus abyssi (strain GE5 / Orsay), this protein is S-methyl-5'-thioadenosine phosphorylase (mntP).